Reading from the N-terminus, the 653-residue chain is Potassium voltage-gated channel subfamily A member 4 (653 aa).

Residues 1-304 (MEVAMVSAES…LLFEYPESSS (304 aa)) are Cytoplasmic-facing. A disordered region spans residues 24–148 (QARARERERL…RFYYSEDDHG (125 aa)). Residues 36–52 (SRAAAAAAVAAATAAVE) are compositionally biased toward low complexity. Residues 81–97 (GSRRRRRQRSEKKKAHY) are compositionally biased toward basic residues. S90 carries the phosphoserine; by PKA modification. Residue S122 is modified to Phosphoserine. Positions 122-137 (SEEEEDEEEEEEEEEE) are enriched in acidic residues. Residues 305–326 (PARGIAIVSVLVILISIVIFCL) form a helical membrane-spanning segment. Residues 327–370 (ETLPEFRDDRDLVMALSAGGHGGLLNDTSAPHLENSGHTIFNDP) lie on the Extracellular side of the membrane. Residue N352 is glycosylated (N-linked (GlcNAc...) asparagine). A helical membrane pass occupies residues 371-392 (FFIVETVCIVWFSFEFVVRCFA). The Cytoplasmic segment spans residues 393 to 403 (CPSQALFFKNI). The chain crosses the membrane as a helical span at residues 404-424 (MNIIDIVSILPYFITLGTDLA). Residues 425–439 (QQQGGGNGQQQQAMS) lie on the Extracellular side of the membrane. Residues 440 to 460 (FAILRIIRLVRVFRIFKLSRH) form a helical; Voltage-sensor membrane-spanning segment. Residues 461 to 475 (SKGLQILGHTLRASM) lie on the Cytoplasmic side of the membrane. The interval 462 to 475 (KGLQILGHTLRASM) is S4-S5 linker. A helical transmembrane segment spans residues 476-497 (RELGLLIFFLFIGVILFSSAVY). Topologically, residues 498–511 (FAEADEPTTHFQSI) are extracellular. Residues 512–523 (PDAFWWAVVTMT) constitute an intramembrane region (helical). The Selectivity filter signature appears at 524–529 (TVGYGD). Residues 524-531 (TVGYGDMK) lie within the membrane without spanning it. The Extracellular segment spans residues 532–538 (PITVGGK). A helical transmembrane segment spans residues 539-567 (IVGSLCAIAGVLTIALPVPVIVSNFNYFY). Residues 568 to 653 (HRETENEEQT…SNAKAVETDV (86 aa)) lie on the Cytoplasmic side of the membrane. S599 is subject to Phosphoserine; by PKA. Residues 629 to 640 (CQGKGDDSETDK) show a composition bias toward basic and acidic residues. The segment at 629-653 (CQGKGDDSETDKNNCSNAKAVETDV) is disordered. Positions 651–653 (TDV) match the PDZ-binding motif.

It belongs to the potassium channel family. A (Shaker) (TC 1.A.1.2) subfamily. Kv1.4/KCNA4 sub-subfamily. As to quaternary structure, homotetramer and heterotetramer of potassium channel proteins. Interacts with KCNAB1 and KCNAB2. Interacts with DLG1, DLG2 and DLG4 via their PDZ domains. Interacts with SIGMAR1. Detected in a complex with KCNA1. Interacts with KCNA2. Part of a complex containing KCNA1, KCNAB1 and LGI1. Interacts (via cytoplasmic N-terminal domain) with KCNRG. Expressed in brain, and at lower levels in the testis, lung, kidney, colon and heart. Detected in heart ventricle.

It is found in the cell membrane. The protein localises to the cell projection. Its subcellular location is the axon. The catalysed reaction is K(+)(in) = K(+)(out). Inhibited by 4-aminopyridine (4-AP), but not by tetraethylammonium (TEA) and charybdotoxin (CTX). Voltage-gated potassium channel that mediates transmembrane potassium transport in excitable membranes. Forms tetrameric potassium-selective channels through which potassium ions pass in accordance with their electrochemical gradient. The channel alternates between opened and closed conformations in response to the voltage difference across the membrane. Can form functional homotetrameric channels and heterotetrameric channels that contain variable proportions of KCNA1, KCNA2, KCNA4, KCNA5, and possibly other family members as well; channel properties depend on the type of alpha subunits that are part of the channel. Channel properties are modulated by cytoplasmic beta subunits that regulate the subcellular location of the alpha subunits and promote rapid inactivation. In vivo, membranes probably contain a mixture of heteromeric potassium channel complexes, making it difficult to assign currents observed in intact tissues to any particular potassium channel family member. Homotetrameric KCNA4 forms a potassium channel that opens in response to membrane depolarization, followed by rapid spontaneous channel closure. Likewise, a heterotetrameric channel formed by KCNA1 and KCNA4 shows rapid inactivation. The chain is Potassium voltage-gated channel subfamily A member 4 (KCNA4) from Homo sapiens (Human).